The sequence spans 576 residues: Rop guanine nucleotide exchange factor 13 (576 aa).

Residues 119–485 (KSCYFAYVTE…QLTQNPELAM (367 aa)) form the PRONE domain. Over residues 557–570 (KTTYLESLGTTRSP) the composition is skewed to polar residues. The interval 557-576 (KTTYLESLGTTRSPTAGRYS) is disordered.

As to quaternary structure, interacts with PRK6. As to expression, specifically expressed in mature flowers.

Functionally, guanine-nucleotide exchange factor (GEF) that acts as an activator of Rop (Rho of plants) GTPases by promoting the exchange of GDP for GTP. The sequence is that of Rop guanine nucleotide exchange factor 13 from Arabidopsis thaliana (Mouse-ear cress).